A 362-amino-acid polypeptide reads, in one-letter code: MPNSKTNIKAYTRQELRDTIAALGEPAYRADQIHRWLFSDWVTDFEKMKNISASLREELSRRYVIPSCSFENEAIEERSVSAPETSKFLVGLHDDEMVETVLIPSPDRHTVCVSSQVGCPLRCTFCATGYMGFTRNLLASEIVEQVLLVNERLGDRSPDNHVTNMVFMGMGEPLLNLNNVFDAIETLTNQSYNFSLSRKRITISTVGLIPQIGELARSGLSIKLAISLHAADQEKRTSLIPVAKEHTLEELRHALHEYADMVKEPVTLVYMLIEGVNDADQDAINLIRFAQGFLCKINLIDYNCIVNVKFNPVKAEKRDRFIHTLVNAGVHVTVRKSQGASIDAACGQLALQKKNKTASRPY.

The Proton acceptor role is filled by E99. Residues 105–341 (SPDRHTVCVS…VTVRKSQGAS (237 aa)) form the Radical SAM core domain. C112 and C346 are oxidised to a cystine. [4Fe-4S] cluster contacts are provided by C119, C123, and C126. S-adenosyl-L-methionine is bound by residues 171 to 172 (GE), S204, 227 to 229 (SLH), and N303. C346 serves as the catalytic S-methylcysteine intermediate.

The protein belongs to the radical SAM superfamily. RlmN family. Requires [4Fe-4S] cluster as cofactor.

It localises to the cytoplasm. The enzyme catalyses adenosine(2503) in 23S rRNA + 2 reduced [2Fe-2S]-[ferredoxin] + 2 S-adenosyl-L-methionine = 2-methyladenosine(2503) in 23S rRNA + 5'-deoxyadenosine + L-methionine + 2 oxidized [2Fe-2S]-[ferredoxin] + S-adenosyl-L-homocysteine. It catalyses the reaction adenosine(37) in tRNA + 2 reduced [2Fe-2S]-[ferredoxin] + 2 S-adenosyl-L-methionine = 2-methyladenosine(37) in tRNA + 5'-deoxyadenosine + L-methionine + 2 oxidized [2Fe-2S]-[ferredoxin] + S-adenosyl-L-homocysteine. Its function is as follows. Specifically methylates position 2 of adenine 2503 in 23S rRNA and position 2 of adenine 37 in tRNAs. This is Probable dual-specificity RNA methyltransferase RlmN from Chlorobium phaeobacteroides (strain BS1).